The chain runs to 179 residues: Large ribosomal subunit protein uL5 (179 aa).

This sequence belongs to the universal ribosomal protein uL5 family. In terms of assembly, part of the 50S ribosomal subunit; part of the 5S rRNA/L5/L18/L25 subcomplex. Contacts the 5S rRNA and the P site tRNA. Forms a bridge to the 30S subunit in the 70S ribosome.

Functionally, this is one of the proteins that bind and probably mediate the attachment of the 5S RNA into the large ribosomal subunit, where it forms part of the central protuberance. In the 70S ribosome it contacts protein S13 of the 30S subunit (bridge B1b), connecting the 2 subunits; this bridge is implicated in subunit movement. Contacts the P site tRNA; the 5S rRNA and some of its associated proteins might help stabilize positioning of ribosome-bound tRNAs. This is Large ribosomal subunit protein uL5 from Edwardsiella ictaluri (strain 93-146).